We begin with the raw amino-acid sequence, 526 residues long: Rho guanine nucleotide exchange factor 3 (526 aa).

Residues 20-40 (ELPPASGPAKDAEEPSNKRVK) form a disordered region. Phosphoserine is present on residues serine 47 and serine 70. The DH domain occupies 122–304 (KRQEAIFELS…QGIVAEINTK (183 aa)). The 159-residue stretch at 291-449 (INIIQGIVAE…WLNCIRQAKE (159 aa)) folds into the PH domain. The disordered stretch occupies residues 464–526 (EGSFLNPTTG…GNSRHGESNV (63 aa)). Polar residues predominate over residues 466–475 (SFLNPTTGSR).

Interacts with RHOA and RHOB. Widely expressed. Highest levels are found in adult brain and skeletal muscle. Lower levels are found in heart and kidney.

It is found in the cytoplasm. In terms of biological role, acts as a guanine nucleotide exchange factor (GEF) for RhoA and RhoB GTPases. This chain is Rho guanine nucleotide exchange factor 3 (ARHGEF3), found in Homo sapiens (Human).